A 455-amino-acid chain; its full sequence is MALWGGRFQGETSALFKLFNDSLPVDYRLFEQDVIGSIAWADAIASVGVISAAECTELKAALKELLAEVGDDPQVIISTGAEDIHSFVEQKLIAKVGDLGKKLHTGRSRNDQVATDLKLWCKREGAALLARLNTLRSELIALAEREVDAVMPGYTHLQRAQPITFGHWCLAYVEMFERDLSRLTDALKRADTCPLGSGALAGTAYPIDRHALASALNFARPTLNSLDSVSDRDHVVELCSSASISMMHLSRMAEDLIFFNSGEANFISLADDVTSGSSLMPQKKNPDALELIRGKTGRVYGSLMGILTTMKALPLAYNKDMQEDKEGLFDVVDSWAICLDMAALVLSGLKVNREPALQAAQQGYANATELADYLVAKGMPFREAHHVVGEVVVFAITQQQPIEDLTLTQLQAFAKEISDDVYPNLTIAACLSKRNVLGGTAVNQVSAAIAVKKQD.

Belongs to the lyase 1 family. Argininosuccinate lyase subfamily.

The protein localises to the cytoplasm. The enzyme catalyses 2-(N(omega)-L-arginino)succinate = fumarate + L-arginine. It functions in the pathway amino-acid biosynthesis; L-arginine biosynthesis; L-arginine from L-ornithine and carbamoyl phosphate: step 3/3. The polypeptide is Argininosuccinate lyase (Shewanella denitrificans (strain OS217 / ATCC BAA-1090 / DSM 15013)).